We begin with the raw amino-acid sequence, 655 residues long: p-hydroxybenzoic acid efflux pump subunit AaeB (655 aa).

Helical transmembrane passes span 13-33, 38-58, 69-89, 93-113, 121-141, 152-172, 370-390, 407-427, 431-451, 459-479, and 482-502; these read FAVK…HFQL, WAVL…GGEP, LRII…ISMI, LLMI…SSLV, WGLS…EPLL, EIVI…PRSI, LFWL…IAVV, FIYG…VIIP, QSML…GIEV, MGAL…TFHF, and FLDS…VILL.

It belongs to the aromatic acid exporter ArAE (TC 2.A.85) family.

The protein localises to the cell inner membrane. Its function is as follows. Forms an efflux pump with AaeA. Could function as a metabolic relief valve, allowing to eliminate certain compounds when they accumulate to high levels in the cell. The protein is p-hydroxybenzoic acid efflux pump subunit AaeB of Salmonella arizonae (strain ATCC BAA-731 / CDC346-86 / RSK2980).